The sequence spans 313 residues: WUSCHEL-related homeobox 5 (313 aa).

Residues 1-32 are disordered; it reads METTTTTLGGGGGGRAGGFSDPPSPLSPPLSP. A compositionally biased stretch (gly residues) spans 8-17; sequence LGGGGGGRAG. The segment covering 22–31 has biased composition (pro residues); it reads PPSPLSPPLS. Positions 40 to 104 form a DNA-binding region, homeobox; WUS-type; it reads LANARWTPTK…NHKARQRQKQ (65 aa). 2 disordered regions span residues 224–247 and 271–313; these read AAGR…GRET and CAAV…SGGR. Residues 271–301 are compositionally biased toward low complexity; that stretch reads CAAVSPTTPSASASFSWESESSDSPSSEAPP.

Belongs to the WUS homeobox family.

Its subcellular location is the nucleus. In terms of biological role, transcription factor which may be involved in developmental processes. This is WUSCHEL-related homeobox 5 (WOX5) from Oryza sativa subsp. japonica (Rice).